A 661-amino-acid polypeptide reads, in one-letter code: Acyl-coenzyme A oxidase acox-1.2 (661 aa).

Residues 147-150 (YAQT), 155-156 (GS), and Gly-189 each bind FAD. Substrate is bound by residues 283–286 (KIGY) and Arg-293. Residues Arg-318 and 338–341 (QQHR) each bind FAD. ATP is bound by residues His-340, Ser-390, His-394, and Gln-402. An FAD-binding site is contributed by Gly-409. Residue 431 to 432 (YE) participates in substrate binding. The Proton acceptor role is filled by Glu-432. Residue Glu-434 coordinates FAD. Residues 525-528 (RASR) and Tyr-573 each bind ATP. A Microbody targeting signal motif is present at residues 659 to 661 (AKL).

This sequence belongs to the acyl-CoA oxidase family. As to quaternary structure, homodimer. Forms a heterodimer with acox-1.1. Requires FAD as cofactor.

It is found in the peroxisome. The enzyme catalyses asc-omegaC5-CoA + O2 = asc-omegaDeltaC5-CoA + H2O2. It functions in the pathway lipid metabolism; peroxisomal fatty acid beta-oxidation. With respect to regulation, activated by ATP. ATP binding leads to a conformational change that promotes FAD cofactor binding and enzyme activity. ATP binding likely occurs during acox-1.2 folding and/or dimer formation. The preference for processing substrates with shorter fatty acid chains is likely due to the closed conformation of the active site. Functionally, involved in the first step of peroxisomal beta-oxidation by catalyzing the desaturation of fatty acid-derived side chains of ascaroside pheromones, which regulates development and behavior. Specifically, shortens ascarosides with 5-carbon omega side chain (asc-omega-C5). Does not shorten indol-3-carbonyl(IC)-ascaroside with 7-carbon or 9-carbon side chains. Does not catalyze the desaturation of fatty acids or hydroxylated fatty acids. The protein is Acyl-coenzyme A oxidase acox-1.2 of Caenorhabditis elegans.